Consider the following 228-residue polypeptide: Large ribosomal subunit protein uL1 (228 aa).

It belongs to the universal ribosomal protein uL1 family. Part of the 50S ribosomal subunit.

Binds directly to 23S rRNA. The L1 stalk is quite mobile in the ribosome, and is involved in E site tRNA release. In terms of biological role, protein L1 is also a translational repressor protein, it controls the translation of the L11 operon by binding to its mRNA. The chain is Large ribosomal subunit protein uL1 from Clavibacter sepedonicus (Clavibacter michiganensis subsp. sepedonicus).